Reading from the N-terminus, the 73-residue chain is uncharacterized protein (73 aa).

The chain crosses the membrane as a helical span at residues 54–72; sequence VSFIVAPTVMQVQCLFFFI.

It is found in the membrane. This is an uncharacterized protein from Saccharomyces cerevisiae (strain ATCC 204508 / S288c) (Baker's yeast).